Reading from the N-terminus, the 325-residue chain is tRNA-dihydrouridine(16) synthase (325 aa).

Residues 12–14 (PMQ) and Gln73 contribute to the FMN site. The Proton donor role is filled by Cys103. FMN-binding positions include Lys144, 205–207 (NGE), and 229–230 (GR).

This sequence belongs to the Dus family. DusC subfamily. The cofactor is FMN.

It catalyses the reaction 5,6-dihydrouridine(16) in tRNA + NADP(+) = uridine(16) in tRNA + NADPH + H(+). The enzyme catalyses 5,6-dihydrouridine(16) in tRNA + NAD(+) = uridine(16) in tRNA + NADH + H(+). In terms of biological role, catalyzes the synthesis of 5,6-dihydrouridine (D), a modified base found in the D-loop of most tRNAs, via the reduction of the C5-C6 double bond in target uridines. Specifically modifies U16 in tRNAs. This is tRNA-dihydrouridine(16) synthase from Haemophilus ducreyi (strain 35000HP / ATCC 700724).